The primary structure comprises 145 residues: Venom protein 30.1 (145 aa).

The signal sequence occupies residues 1-18; that stretch reads MIIVKLFTCLLMVSSVLT.

Contains 5 disulfide bonds. In terms of tissue distribution, expressed by the venom gland.

It is found in the secreted. The chain is Venom protein 30.1 from Lychas mucronatus (Chinese swimming scorpion).